A 432-amino-acid polypeptide reads, in one-letter code: Adenylosuccinate synthetase (432 aa).

Residues 13-19 (GDEGKGK) and 41-43 (GHT) each bind GTP. Catalysis depends on Asp14, which acts as the Proton acceptor. The Mg(2+) site is built by Asp14 and Gly41. Residues 14–17 (DEGK), 39–42 (NAGH), Thr130, Arg144, Gln225, Thr240, and Arg304 each bind IMP. His42 (proton donor) is an active-site residue. 300 to 306 (ATTGRRR) contacts substrate. GTP contacts are provided by residues Arg306, 332–334 (KLD), and 415–417 (STG).

It belongs to the adenylosuccinate synthetase family. Homodimer. Mg(2+) serves as cofactor.

Its subcellular location is the cytoplasm. It carries out the reaction IMP + L-aspartate + GTP = N(6)-(1,2-dicarboxyethyl)-AMP + GDP + phosphate + 2 H(+). It functions in the pathway purine metabolism; AMP biosynthesis via de novo pathway; AMP from IMP: step 1/2. Its function is as follows. Plays an important role in the de novo pathway of purine nucleotide biosynthesis. Catalyzes the first committed step in the biosynthesis of AMP from IMP. The protein is Adenylosuccinate synthetase of Escherichia coli (strain K12).